The chain runs to 35 residues: Bacteriocin lactococcin-G subunit beta (35 aa).

As to quaternary structure, bacteriocin activity requires interaction of alpha and beta peptides in a molar ratio of 7:1 or 8:1 respectively.

Functionally, kills Lactococci. This is Bacteriocin lactococcin-G subunit beta from Lactococcus lactis subsp. lactis (Streptococcus lactis).